Reading from the N-terminus, the 935-residue chain is C-1-tetrahydrofolate synthase, cytoplasmic (935 aa).

Residue Met1 is modified to N-acetylmethionine. Positions 2 to 291 (APAGILNGKV…MLMQSTVESA (290 aa)) are methylenetetrahydrofolate dehydrogenase and methenyltetrahydrofolate cyclohydrolase (D/C) domain. Substrate contacts are provided by residues 52–56 (YINVK) and 99–101 (VQL). Lys56 is an active-site residue. Residues 172 to 174 (GRS) and Ser197 contribute to the NADP(+) site. 272–276 (PGGVG) contributes to the substrate binding site. Positions 310-935 (LNLKTPVPSD…PETEQVNGLF (626 aa)) are formyltetrahydrofolate synthetase domain. A Phosphoserine modification is found at Ser318. 380-387 (TPLGEGKS) serves as a coordination point for ATP. Phosphoserine is present on residues Ser413 and Ser490.

The protein in the N-terminal section; belongs to the tetrahydrofolate dehydrogenase/cyclohydrolase family. This sequence in the C-terminal section; belongs to the formate--tetrahydrofolate ligase family. In terms of assembly, homodimer.

Its subcellular location is the cytoplasm. The enzyme catalyses (6R)-5,10-methylene-5,6,7,8-tetrahydrofolate + NADP(+) = (6R)-5,10-methenyltetrahydrofolate + NADPH. It catalyses the reaction (6R)-5,10-methenyltetrahydrofolate + H2O = (6R)-10-formyltetrahydrofolate + H(+). It carries out the reaction (6S)-5,6,7,8-tetrahydrofolate + formate + ATP = (6R)-10-formyltetrahydrofolate + ADP + phosphate. It participates in one-carbon metabolism; tetrahydrofolate interconversion. Trifunctional enzyme that catalyzes the interconversion of three forms of one-carbon-substituted tetrahydrofolate: (6R)-5,10-methylene-5,6,7,8-tetrahydrofolate, 5,10-methenyltetrahydrofolate and (6S)-10-formyltetrahydrofolate. These derivatives of tetrahydrofolate are differentially required in nucleotide and amino acid biosynthesis, (6S)-10-formyltetrahydrofolate being required for purine biosynthesis while (6R)-5,10-methylene-5,6,7,8-tetrahydrofolate is used for serine and methionine biosynthesis for instance. In Rattus norvegicus (Rat), this protein is C-1-tetrahydrofolate synthase, cytoplasmic (Mthfd1).